Here is a 176-residue protein sequence, read N- to C-terminus: Putative metal-dependent hydrolase BLi00869/BLi00870/BL03027 (176 aa).

Residues histidine 65, histidine 158, and histidine 162 each coordinate Zn(2+).

The protein belongs to the metal hydrolase YfiT family. Homodimer. Requires Zn(2+) as cofactor.

Its subcellular location is the cytoplasm. Functionally, possible metal-dependent hydrolase. The sequence is that of Putative metal-dependent hydrolase BLi00869/BLi00870/BL03027 from Bacillus licheniformis (strain ATCC 14580 / DSM 13 / JCM 2505 / CCUG 7422 / NBRC 12200 / NCIMB 9375 / NCTC 10341 / NRRL NRS-1264 / Gibson 46).